Reading from the N-terminus, the 184-residue chain is Large ribosomal subunit protein uL15 (184 aa).

Residues 1–45 (MDLSSLRPAKGAVKNKKRVGRGQGSGNGTTAGKGNNGQQSRSGYK) are disordered. Residues 21–35 (RGQGSGNGTTAGKGN) show a composition bias toward gly residues.

This sequence belongs to the universal ribosomal protein uL15 family. As to quaternary structure, part of the 50S ribosomal subunit.

In terms of biological role, binds to the 23S rRNA. In Pelodictyon phaeoclathratiforme (strain DSM 5477 / BU-1), this protein is Large ribosomal subunit protein uL15.